Here is a 153-residue protein sequence, read N- to C-terminus: 6,7-dimethyl-8-ribityllumazine synthase (153 aa).

5-amino-6-(D-ribitylamino)uracil contacts are provided by residues phenylalanine 22, 56 to 58 (AFE), and 80 to 82 (TVI). Residue 85 to 86 (ST) coordinates (2S)-2-hydroxy-3-oxobutyl phosphate. Catalysis depends on histidine 88, which acts as the Proton donor. Residue phenylalanine 113 coordinates 5-amino-6-(D-ribitylamino)uracil. Arginine 127 contacts (2S)-2-hydroxy-3-oxobutyl phosphate.

This sequence belongs to the DMRL synthase family. As to quaternary structure, forms an icosahedral capsid composed of 60 subunits, arranged as a dodecamer of pentamers.

It catalyses the reaction (2S)-2-hydroxy-3-oxobutyl phosphate + 5-amino-6-(D-ribitylamino)uracil = 6,7-dimethyl-8-(1-D-ribityl)lumazine + phosphate + 2 H2O + H(+). The protein operates within cofactor biosynthesis; riboflavin biosynthesis; riboflavin from 2-hydroxy-3-oxobutyl phosphate and 5-amino-6-(D-ribitylamino)uracil: step 1/2. In terms of biological role, catalyzes the formation of 6,7-dimethyl-8-ribityllumazine by condensation of 5-amino-6-(D-ribitylamino)uracil with 3,4-dihydroxy-2-butanone 4-phosphate. This is the penultimate step in the biosynthesis of riboflavin. This chain is 6,7-dimethyl-8-ribityllumazine synthase, found in Actinobacillus pleuropneumoniae (Haemophilus pleuropneumoniae).